The primary structure comprises 177 residues: F(420)H(2) dehydrogenase subunit I (177 aa).

The interval 1 to 21 (MGCPEVQDRPGSGYELEETPA) is disordered. 2 consecutive 4Fe-4S ferredoxin-type domains span residues 76 to 105 (GLQT…IVKA) and 116 to 145 (WFPQ…SGKE). Residues Cys-85, Cys-88, Cys-91, Cys-95, Cys-125, Cys-128, Cys-131, and Cys-135 each coordinate [4Fe-4S] cluster.

Belongs to the complex I 23 kDa subunit family. The FPO complex is composed of at least 13 different subunits. Requires [4Fe-4S] cluster as cofactor.

It catalyses the reaction methanophenazine + reduced coenzyme F420-(gamma-L-Glu)(n) = dihydromethanophenazine + oxidized coenzyme F420-(gamma-L-Glu)(n) + H(+). Component of the F(420)H(2) dehydrogenase (FPO complex) which is part of the energy-conserving F(420)H(2):heterodisulfide oxidoreductase system. The membrane-bound electron transfer system of the complex plays an important role in the metabolism of methylotrophic methanogens when the organisms grow on methanol or methylamines. Catalyzes the oxidation of methanophenazine to dihydromethanophenazine. It shuttles electrons from F(420)H(2), via FAD and iron-sulfur (Fe-S) centers, to methanophenazine (an electron carrier in the membrane). It couples the redox reaction to proton translocation (for every two electrons transferred, two hydrogen ions are translocated across the cytoplasmic membrane), and thus conserves the redox energy in a proton gradient. It also catalyzes the oxidation of F(420)H(2) with quinones such as 2,3-dimethyl-1,4-naphthoquinone, 2-methyl-1,4-naphthoquinone and tetramethyl-p-benzoquinone. This Methanosarcina mazei (strain ATCC BAA-159 / DSM 3647 / Goe1 / Go1 / JCM 11833 / OCM 88) (Methanosarcina frisia) protein is F(420)H(2) dehydrogenase subunit I (fpoI).